The following is a 279-amino-acid chain: Tryptophan synthase alpha chain (279 aa).

Active-site proton acceptor residues include Glu-50 and Asp-61.

This sequence belongs to the TrpA family. As to quaternary structure, tetramer of two alpha and two beta chains.

It carries out the reaction (1S,2R)-1-C-(indol-3-yl)glycerol 3-phosphate + L-serine = D-glyceraldehyde 3-phosphate + L-tryptophan + H2O. It participates in amino-acid biosynthesis; L-tryptophan biosynthesis; L-tryptophan from chorismate: step 5/5. Functionally, the alpha subunit is responsible for the aldol cleavage of indoleglycerol phosphate to indole and glyceraldehyde 3-phosphate. In Sinorhizobium fredii (strain NBRC 101917 / NGR234), this protein is Tryptophan synthase alpha chain.